The following is a 768-amino-acid chain: 5-methyltetrahydropteroyltriglutamate--homocysteine methyltransferase (768 aa).

5-methyltetrahydropteroyltri-L-glutamate-binding positions include 17–20 (RELK) and lysine 117. L-homocysteine is bound by residues 442–444 (IGS) and glutamate 495. L-methionine is bound by residues 442–444 (IGS) and glutamate 495. Residues 526 to 527 (RC) and tryptophan 572 each bind 5-methyltetrahydropteroyltri-L-glutamate. Aspartate 610 contacts L-homocysteine. Aspartate 610 serves as a coordination point for L-methionine. Residue glutamate 616 participates in 5-methyltetrahydropteroyltri-L-glutamate binding. Positions 653, 655, and 677 each coordinate Zn(2+). Residue histidine 706 is the Proton donor of the active site. Cysteine 738 contributes to the Zn(2+) binding site.

Belongs to the vitamin-B12 independent methionine synthase family. Zn(2+) serves as cofactor.

The enzyme catalyses 5-methyltetrahydropteroyltri-L-glutamate + L-homocysteine = tetrahydropteroyltri-L-glutamate + L-methionine. Its pathway is amino-acid biosynthesis; L-methionine biosynthesis via de novo pathway; L-methionine from L-homocysteine (MetE route): step 1/1. Catalyzes the transfer of a methyl group from 5-methyltetrahydrofolate to homocysteine resulting in methionine formation. The protein is 5-methyltetrahydropteroyltriglutamate--homocysteine methyltransferase of Bifidobacterium adolescentis (strain ATCC 15703 / DSM 20083 / NCTC 11814 / E194a).